The primary structure comprises 2193 residues: Genome polyprotein (2193 aa).

Positions 1 to 22 (MGSQVSTQRSGSHENSNSASEG) are disordered. The N-myristoyl glycine; by host moiety is linked to residue G2. Residues 2 to 1503 (GSQVSTQRSG…HLNRAVLIMQ (1502 aa)) lie on the Cytoplasmic side of the membrane. 2 amphipathic alpha-helix regions span residues 566-588 (GDGI…LTSL) and 568-588 (GIAD…LTSL). Active-site for protease 2A activity residues include H883 and D901. Residues C918 and C920 each coordinate Zn(2+). C972 (for protease 2A activity) is an active-site residue. Zn(2+) contacts are provided by C978 and H980. A membrane-binding region spans residues 1112–1184 (SASWLKKFND…EQSAASQEDL (73 aa)). The segment at 1112–1250 (SASWLKKFND…SPGTGKSLAT (139 aa)) is oligomerization. The RNA-binding stretch occupies residues 1133 to 1137 (SNKIS). The 159-residue stretch at 1216-1374 (EKRMNNYMQF…YKTDLGRLDA (159 aa)) folds into the SF3 helicase domain. 1240 to 1247 (GSPGTGKS) lines the ATP pocket. Zn(2+) contacts are provided by C1381, C1392, and C1397. The C4-type; degenerate zinc-finger motif lies at 1381 to 1397 (CSENNTANFKRCSPLVC). Residues 1424-1431 (EYNNRYAI) form an RNA-binding region. An oligomerization region spans residues 1435–1440 (IEALFQ). The stretch at 1504–1519 (SIATVVAVVSLVYVIY) is an intramembrane region. Over 1520–2193 (KLFAGFQGAY…NLRRNWLELF (674 aa)) the chain is Cytoplasmic. Y1529 is modified (O-(5'-phospho-RNA)-tyrosine). Positions 1549–1727 (GPSLDFALSL…FCAGLKRSYF (179 aa)) constitute a Peptidase C3 domain. Residues H1588, E1619, and C1695 each act as for protease 3C activity in the active site. Residues 1958 to 2073 (GSLFAFDYSG…ASYPFPIDCL (116 aa)) form the RdRp catalytic domain. Mg(2+) contacts are provided by D1964 and D2060.

The protein belongs to the picornaviruses polyprotein family. As to quaternary structure, interacts with capsid protein VP1 and capsid protein VP3 to form heterotrimeric protomers. Interacts with capsid protein VP0, and capsid protein VP3 to form heterotrimeric protomers. Five protomers subsequently associate to form pentamers which serve as building blocks for the capsid. Interacts with capsid protein VP2, capsid protein VP3 and capsid protein VP4 following cleavage of capsid protein VP0. In terms of assembly, interacts with capsid protein VP1 and capsid protein VP3 in the mature capsid. As to quaternary structure, interacts with capsid protein VP0 and capsid protein VP1 to form heterotrimeric protomers. Five protomers subsequently associate to form pentamers which serve as building blocks for the capsid. Interacts with capsid protein VP4 in the mature capsid. Interacts with protein 2C; this interaction may be important for virion morphogenesis. Interacts with capsid protein VP1 and capsid protein VP3. In terms of assembly, homodimer. As to quaternary structure, homohexamer; forms a hexameric ring structure with 6-fold symmetry characteristic of AAA+ ATPases. Interacts (via N-terminus) with host RTN3 (via reticulon domain); this interaction is important for viral replication. Interacts with capsid protein VP3; this interaction may be important for virion morphogenesis. Interacts with protein 3CD. In terms of assembly, homodimer. Interacts with host GBF1. Interacts (via GOLD domain) with host ACBD3 (via GOLD domain); this interaction allows the formation of a viral protein 3A/ACBD3 heterotetramer with a 2:2 stoichiometry, which will stimulate the recruitment of host PI4KB in order to synthesize PI4P at the viral RNA replication sites. As to quaternary structure, interacts with RNA-directed RNA polymerase. Interacts with host IFIH1/MDA5; this interaction inhibits host IFIH1. In terms of assembly, interacts with protein 3AB and with RNA-directed RNA polymerase. As to quaternary structure, interacts with Viral protein genome-linked and with protein 3CD. The cofactor is Mg(2+). Specific enzymatic cleavages in vivo by the viral proteases yield processing intermediates and the mature proteins. In terms of processing, myristoylation is required for the formation of pentamers during virus assembly. Further assembly of 12 pentamers and a molecule of genomic RNA generates the provirion. Post-translationally, during virion maturation, immature virions are rendered infectious following cleavage of VP0 into VP4 and VP2. This maturation seems to be an autocatalytic event triggered by the presence of RNA in the capsid and it is followed by a conformational change infectious virion. Myristoylation is required during RNA encapsidation and formation of the mature virus particle. In terms of processing, VPg is uridylylated by the polymerase into VPg-pUpU. This acts as a nucleotide-peptide primer for the genomic RNA replication.

The protein resides in the virion. It localises to the host cytoplasm. Its subcellular location is the host cytoplasmic vesicle membrane. The protein localises to the host nucleus. It catalyses the reaction a ribonucleoside 5'-triphosphate + H2O = a ribonucleoside 5'-diphosphate + phosphate + H(+). The enzyme catalyses Selective cleavage of Tyr-|-Gly bond in the picornavirus polyprotein.. It carries out the reaction RNA(n) + a ribonucleoside 5'-triphosphate = RNA(n+1) + diphosphate. The catalysed reaction is Selective cleavage of Gln-|-Gly bond in the poliovirus polyprotein. In other picornavirus reactions Glu may be substituted for Gln, and Ser or Thr for Gly.. Its activity is regulated as follows. Replication or transcription is subject to high level of random mutations by the nucleotide analog ribavirin. Functionally, forms an icosahedral capsid of pseudo T=3 symmetry with capsid proteins VP2 and VP3. The capsid is 300 Angstroms in diameter, composed of 60 copies of each capsid protein and enclosing the viral positive strand RNA genome. Capsid protein VP1 mainly forms the vertices of the capsid. Capsid protein VP1 interacts with host cell receptor to provide virion attachment to target host cells. This attachment induces virion internalization. After binding to its receptor, the capsid undergoes conformational changes. Capsid protein VP1 N-terminus (that contains an amphipathic alpha-helix) and capsid protein VP4 are externalized. Together, they shape a pore in the host membrane through which viral genome is translocated to host cell cytoplasm. Forms an icosahedral capsid of pseudo T=3 symmetry with capsid proteins VP2 and VP3. The capsid is 300 Angstroms in diameter, composed of 60 copies of each capsid protein and enclosing the viral positive strand RNA genome. Its function is as follows. Lies on the inner surface of the capsid shell. After binding to the host receptor, the capsid undergoes conformational changes. Capsid protein VP4 is released, Capsid protein VP1 N-terminus is externalized, and together, they shape a pore in the host membrane through which the viral genome is translocated into the host cell cytoplasm. In terms of biological role, component of immature procapsids, which is cleaved into capsid proteins VP4 and VP2 after maturation. Allows the capsid to remain inactive before the maturation step. Functionally, cysteine protease that cleaves viral polyprotein and specific host proteins. It is responsible for the autocatalytic cleavage between the P1 and P2 regions, which is the first cleavage occurring in the polyprotein. Also cleaves the host translation initiation factor EIF4G1, in order to shut down the capped cellular mRNA translation. Inhibits the host nucleus-cytoplasm protein and RNA trafficking by cleaving host members of the nuclear pores. Counteracts stress granule formation probably by antagonizing its assembly or promoting its dissassembly. Cleaves and inhibits host IFIH1/MDA5, thereby inhibiting the type-I IFN production and the establishment of the antiviral state. Cleaves and inhibits host MAVS, thereby inhibiting the type-I IFN production and the establishment of the antiviral state. Plays an essential role in the virus replication cycle by acting as a viroporin. Creates a pore in the host endoplasmic reticulum and as a consequence releases Ca2+ in the cytoplasm of infected cell. In turn, high levels of cytoplasmic calcium may trigger membrane trafficking and transport of viral ER-associated proteins to viroplasms, sites of viral genome replication. Its function is as follows. Induces and associates with structural rearrangements of intracellular membranes. Displays RNA-binding, nucleotide binding and NTPase activities. May play a role in virion morphogenesis and viral RNA encapsidation by interacting with the capsid protein VP3. In terms of biological role, localizes the viral replication complex to the surface of membranous vesicles. Together with protein 3CD binds the Cis-Active RNA Element (CRE) which is involved in RNA synthesis initiation. Acts as a cofactor to stimulate the activity of 3D polymerase, maybe through a nucleid acid chaperone activity. Functionally, localizes the viral replication complex to the surface of membranous vesicles. It inhibits host cell endoplasmic reticulum-to-Golgi apparatus transport and causes the disassembly of the Golgi complex, possibly through GBF1 interaction. This would result in depletion of MHC, trail receptors and IFN receptors at the host cell surface. Plays an essential role in viral RNA replication by recruiting ACBD3 and PI4KB at the viral replication sites, thereby allowing the formation of the rearranged membranous structures where viral replication takes place. Acts as a primer for viral RNA replication and remains covalently bound to viral genomic RNA. VPg is uridylylated prior to priming replication into VPg-pUpU. The oriI viral genomic sequence may act as a template for this. The VPg-pUpU is then used as primer on the genomic RNA poly(A) by the RNA-dependent RNA polymerase to replicate the viral genome. During genome replication, the VPg-RNA linkage is removed by the host TDP2, thereby accelerating replication. During the late stage of the replication cycle, host TDP2 is excluded from sites of viral RNA synthesis and encapsidation, allowing for the generation of progeny virions. Its function is as follows. Involved in the viral replication complex and viral polypeptide maturation. It exhibits protease activity with a specificity and catalytic efficiency that is different from protease 3C. Protein 3CD lacks polymerase activity. Protein 3CD binds to the 5'UTR of the viral genome. In terms of biological role, major viral protease that mediates proteolytic processing of the polyprotein. Cleaves host EIF5B, contributing to host translation shutoff. Also cleaves host PABPC1, contributing to host translation shutoff. Binds and inhibits host IFIH1/MDA5, thereby inhibiting the type-I IFN production and the establishment of the antiviral state. Cleaves host MAP3K7/TAK1, resulting in inhibition of TRAF6-triggered NF-kappa-B induction. Cleaves host NLRP1, triggers host N-glycine-mediated degradation of the autoinhibitory NLRP1 N-terminal fragment. Functionally, replicates the viral genomic RNA on the surface of intracellular membranes. May form linear arrays of subunits that propagate along a strong head-to-tail interaction called interface-I. Covalently attaches UMP to a tyrosine of VPg, which is used to prime RNA synthesis. The positive stranded RNA genome is first replicated at virus induced membranous vesicles, creating a dsRNA genomic replication form. This dsRNA is then used as template to synthesize positive stranded RNA genomes. ss(+)RNA genomes are either translated, replicated or encapsidated. This chain is Genome polyprotein, found in Homo sapiens (Human).